A 361-amino-acid chain; its full sequence is Phosphoserine aminotransferase (361 aa).

Arg-42 is a binding site for L-glutamate. Residues 76-77 (AR), Trp-102, Thr-153, Asp-173, and Gln-196 contribute to the pyridoxal 5'-phosphate site. Position 197 is an N6-(pyridoxal phosphate)lysine (Lys-197). 238–239 (NT) lines the pyridoxal 5'-phosphate pocket.

It belongs to the class-V pyridoxal-phosphate-dependent aminotransferase family. SerC subfamily. Homodimer. Pyridoxal 5'-phosphate is required as a cofactor.

The protein resides in the cytoplasm. It carries out the reaction O-phospho-L-serine + 2-oxoglutarate = 3-phosphooxypyruvate + L-glutamate. It catalyses the reaction 4-(phosphooxy)-L-threonine + 2-oxoglutarate = (R)-3-hydroxy-2-oxo-4-phosphooxybutanoate + L-glutamate. The protein operates within amino-acid biosynthesis; L-serine biosynthesis; L-serine from 3-phospho-D-glycerate: step 2/3. It functions in the pathway cofactor biosynthesis; pyridoxine 5'-phosphate biosynthesis; pyridoxine 5'-phosphate from D-erythrose 4-phosphate: step 3/5. In terms of biological role, catalyzes the reversible conversion of 3-phosphohydroxypyruvate to phosphoserine and of 3-hydroxy-2-oxo-4-phosphonooxybutanoate to phosphohydroxythreonine. This is Phosphoserine aminotransferase from Buchnera aphidicola subsp. Acyrthosiphon pisum (strain 5A).